Here is a 419-residue protein sequence, read N- to C-terminus: Phospho-N-acetylmuramoyl-pentapeptide-transferase (419 aa).

10 helical membrane-spanning segments follow: residues 22-42 (YVSF…TAIG), 72-92 (TPTM…LLCA), 94-114 (LNNI…ALGF), 135-155 (IVGQ…SPDV), 210-230 (AAWL…SNGA), 238-258 (GLAA…AYMS), 266-286 (FLNI…AAFI), 303-323 (FMGD…AIII), 327-347 (LLIP…MLQV), and 396-416 (KIVV…IVTL).

This sequence belongs to the glycosyltransferase 4 family. MraY subfamily. Mg(2+) serves as cofactor.

The protein resides in the cell inner membrane. The enzyme catalyses UDP-N-acetyl-alpha-D-muramoyl-L-alanyl-gamma-D-glutamyl-meso-2,6-diaminopimeloyl-D-alanyl-D-alanine + di-trans,octa-cis-undecaprenyl phosphate = di-trans,octa-cis-undecaprenyl diphospho-N-acetyl-alpha-D-muramoyl-L-alanyl-D-glutamyl-meso-2,6-diaminopimeloyl-D-alanyl-D-alanine + UMP. It functions in the pathway cell wall biogenesis; peptidoglycan biosynthesis. In terms of biological role, catalyzes the initial step of the lipid cycle reactions in the biosynthesis of the cell wall peptidoglycan: transfers peptidoglycan precursor phospho-MurNAc-pentapeptide from UDP-MurNAc-pentapeptide onto the lipid carrier undecaprenyl phosphate, yielding undecaprenyl-pyrophosphoryl-MurNAc-pentapeptide, known as lipid I. The chain is Phospho-N-acetylmuramoyl-pentapeptide-transferase from Parabacteroides distasonis (strain ATCC 8503 / DSM 20701 / CIP 104284 / JCM 5825 / NCTC 11152).